A 486-amino-acid polypeptide reads, in one-letter code: MVENQRAMPQPEMRRIRRIHFVGIGGVGMCGIAEVLLNLGYEVSGSDLKGSAVTERLESFGAQIFIGHRAENTIGADVLVVSSAVNTSNPEVATALERRIPVVPRAEMLAELMRYRHGIAVAGTHGKTTTTSLIASVFAAGGLDPTFVIGGRLNAAGTNAQLGTSRYLIAEADESDASFLHLQPLVAVVTNIDADHMATYEGDFNKLKKTFVEFLHNLPFYGLAVMCIDDPVVREILPLVKRPTLTYGFSESADIRAINVRQDGMLTFFTVLRRDREPLDVSVNMPGNHNVLNSLATIAIATDEGVSDEAIVQGLSGFQGVGRRFQVYGELPVDGGHVMLVDDYGHHPREVAAVINAVRGGWPDRRLVMVYQPHRFSRTRDLYDDFVQVLADANVLLLMEVYPAGEEPIPGADSRNLCHSIRQSGQLDPIYIERGVELAPLVKPLLRAGDILLCQGAGDIGGLAPQLLKSPLFAGAKVASTEGKLK.

123–129 (GTHGKTT) serves as a coordination point for ATP.

The protein belongs to the MurCDEF family.

Its subcellular location is the cytoplasm. It carries out the reaction UDP-N-acetyl-alpha-D-muramate + L-alanine + ATP = UDP-N-acetyl-alpha-D-muramoyl-L-alanine + ADP + phosphate + H(+). It participates in cell wall biogenesis; peptidoglycan biosynthesis. Functionally, cell wall formation. This is UDP-N-acetylmuramate--L-alanine ligase from Pseudomonas syringae pv. syringae (strain B728a).